Here is a 548-residue protein sequence, read N- to C-terminus: Kinetochore and Eb1-associated basic protein (548 aa).

Disordered regions lie at residues 1–51 (MSSM…PKHP) and 82–181 (YRSS…IRPK). 3 stretches are compositionally biased toward basic and acidic residues: residues 20–29 (RTKELLERQR), 104–116 (RTWE…EFRS), and 127–141 (PRPR…DLRS). Residues 100 to 253 (QNRQRTWEGP…TTSKRKLDFK (154 aa)) form an important for kinetochore and microtubule localization region. Residues 144 to 155 (QGTPATKIPSQR) are compositionally biased toward polar residues. The SXIP motif 1 motif lies at 149–152 (TKIP). Residues 156–165 (NPKENQELSK) are compositionally biased toward basic and acidic residues. The segment covering 166 to 175 (SHTCIPSSEP) has biased composition (polar residues). The short motif at 168 to 171 (TCIP) is the SXIP motif 2 element. The segment at 237-372 (SDKGIKLTTS…MCALPVVSEK (136 aa)) is CH (calponin-homology)-like region, which is not required for kinetochore and microtubule localization. Residues 386 to 457 (YDVMSLQQKF…LQLQRLRLQE (72 aa)) adopt a coiled-coil conformation.

As to quaternary structure, interacts with Eb1 via the two SxIP motifs; the interaction is not required for kebab kinetochore localization.

It localises to the cytoplasm. The protein localises to the perinuclear region. Its subcellular location is the chromosome. The protein resides in the centromere. It is found in the kinetochore. It localises to the cytoskeleton. The protein localises to the spindle. This Drosophila melanogaster (Fruit fly) protein is Kinetochore and Eb1-associated basic protein.